A 72-amino-acid polypeptide reads, in one-letter code: Large ribosomal subunit protein bL31 (72 aa).

The protein belongs to the bacterial ribosomal protein bL31 family. Type A subfamily. In terms of assembly, part of the 50S ribosomal subunit.

Its function is as follows. Binds the 23S rRNA. The protein is Large ribosomal subunit protein bL31 of Prosthecochloris aestuarii (strain DSM 271 / SK 413).